The sequence spans 85 residues: Small ribosomal subunit protein uS17 (85 aa).

The protein belongs to the universal ribosomal protein uS17 family. In terms of assembly, part of the 30S ribosomal subunit.

Its function is as follows. One of the primary rRNA binding proteins, it binds specifically to the 5'-end of 16S ribosomal RNA. The polypeptide is Small ribosomal subunit protein uS17 (Citrifermentans bemidjiense (strain ATCC BAA-1014 / DSM 16622 / JCM 12645 / Bem) (Geobacter bemidjiensis)).